Here is a 123-residue protein sequence, read N- to C-terminus: Large ribosomal subunit protein uL14 (123 aa).

It belongs to the universal ribosomal protein uL14 family. As to quaternary structure, part of the 50S ribosomal subunit. Forms a cluster with proteins L3 and L19. In the 70S ribosome, L14 and L19 interact and together make contacts with the 16S rRNA in bridges B5 and B8.

Binds to 23S rRNA. Forms part of two intersubunit bridges in the 70S ribosome. In Zymomonas mobilis subsp. mobilis (strain ATCC 31821 / ZM4 / CP4), this protein is Large ribosomal subunit protein uL14.